The sequence spans 624 residues: Phosphoenolpyruvate carboxykinase (ATP) 1 (624 aa).

Residues 1-22 (MASPNGGVTTYDYDDSDSAAPV) are disordered. 322–329 (GLSGTGKT) is an ATP binding site.

It belongs to the phosphoenolpyruvate carboxykinase (ATP) family. Homohexamer. As to expression, green leaves but not in roots or etiolated shoots.

It localises to the cytoplasm. It carries out the reaction oxaloacetate + ATP = phosphoenolpyruvate + ADP + CO2. The protein operates within carbohydrate biosynthesis; gluconeogenesis. This chain is Phosphoenolpyruvate carboxykinase (ATP) 1 (PCK1), found in Urochloa panicoides (Panic liverseed grass).